The primary structure comprises 166 residues: MTQGRQKEELQDITLLGNQNNKYEFDYTPEVLETFDNKHQGRDYFVKFNCPEFTSLCPITGQPDFATIYISYIPNIKMVESKSLKLYLFSFRNHGDFHEDCMNIIMNDLIDLMDPHYIEVWGKFTPRGGISIDPYTNYGRPNSKYEKMAEHRLMNHDLYPEKIDNR.

Catalysis depends on Cys57, which acts as the Thioimide intermediate. Residue Asp64 is the Proton donor of the active site. Substrate-binding positions include 79 to 81 (VES) and 98 to 99 (HE).

It belongs to the GTP cyclohydrolase I family. QueF type 1 subfamily.

Its subcellular location is the cytoplasm. The catalysed reaction is 7-aminomethyl-7-carbaguanine + 2 NADP(+) = 7-cyano-7-deazaguanine + 2 NADPH + 3 H(+). It participates in tRNA modification; tRNA-queuosine biosynthesis. In terms of biological role, catalyzes the NADPH-dependent reduction of 7-cyano-7-deazaguanine (preQ0) to 7-aminomethyl-7-deazaguanine (preQ1). The protein is NADPH-dependent 7-cyano-7-deazaguanine reductase of Staphylococcus haemolyticus (strain JCSC1435).